The primary structure comprises 363 residues: Outer membrane porin F (363 aa).

An N-terminal signal peptide occupies residues 1-22 (MMKRKILAAVIPALLAAATANA).

Belongs to the Gram-negative porin family. As to quaternary structure, homotrimer. Forms mixed heterotrimers with OmpC and with PhoE; other mixed heterotrimers with other porins are also probable.

It localises to the cell outer membrane. Forms pores that allow passive diffusion of small molecules across the outer membrane. The sequence is that of Outer membrane porin F from Salmonella typhimurium (strain SL1344).